The primary structure comprises 333 residues: Sphingomyelinase C (333 aa).

An N-terminal signal peptide occupies residues 1–27; it reads MKGKLLKGVLSFGIGLGVLYGGSSVQA. Cysteines 150 and 186 form a disulfide.

Belongs to the neutral sphingomyelinase family. Mg(2+) is required as a cofactor.

It localises to the secreted. The enzyme catalyses a sphingomyelin + H2O = phosphocholine + an N-acylsphing-4-enine + H(+). Its activity is regulated as follows. Activated by cobalt and manganese ions. In terms of biological role, required, with sphingomyelinase, to effect target cell lysis (hemolysis). The chain is Sphingomyelinase C (sph) from Bacillus cereus.